The sequence spans 466 residues: Uronate isomerase (466 aa).

The protein belongs to the metallo-dependent hydrolases superfamily. Uronate isomerase family.

It carries out the reaction D-glucuronate = D-fructuronate. The catalysed reaction is aldehydo-D-galacturonate = keto-D-tagaturonate. The protein operates within carbohydrate metabolism; pentose and glucuronate interconversion. This chain is Uronate isomerase, found in Lachnoclostridium phytofermentans (strain ATCC 700394 / DSM 18823 / ISDg) (Clostridium phytofermentans).